The primary structure comprises 79 residues: Acyl carrier protein (79 aa).

Residues 2 to 77 (SEIGERVKKI…DAVKFLEKNA (76 aa)) enclose the Carrier domain. Position 37 is an O-(pantetheine 4'-phosphoryl)serine (Ser-37).

This sequence belongs to the acyl carrier protein (ACP) family. Post-translationally, 4'-phosphopantetheine is transferred from CoA to a specific serine of apo-ACP by AcpS. This modification is essential for activity because fatty acids are bound in thioester linkage to the sulfhydryl of the prosthetic group.

It is found in the cytoplasm. It functions in the pathway lipid metabolism; fatty acid biosynthesis. Its function is as follows. Carrier of the growing fatty acid chain in fatty acid biosynthesis. This is Acyl carrier protein from Rhodopseudomonas palustris (strain BisA53).